The sequence spans 307 residues: Nucleotide-binding protein Achl_1824 (307 aa).

30-37 (GMSGAGRS) contributes to the ATP binding site. GTP is bound at residue 81–84 (DVRS).

This sequence belongs to the RapZ-like family.

In terms of biological role, displays ATPase and GTPase activities. The chain is Nucleotide-binding protein Achl_1824 from Pseudarthrobacter chlorophenolicus (strain ATCC 700700 / DSM 12829 / CIP 107037 / JCM 12360 / KCTC 9906 / NCIMB 13794 / A6) (Arthrobacter chlorophenolicus).